We begin with the raw amino-acid sequence, 667 residues long: MIHELLLALSGYPGSIFTWNKRSGLQVSQDFPFLHPSETSVLNRLCRLGTDYIRFTEFIEQYTGHVQQQDHHPPQQGQGGLHGIYLRAFCTGLDSVLQPYRQALLDLEQEFLADPHLSISHVNYSLDQFQLLFPSVMVVVEQIKSQKIHGCQILETVYKHSCGGLPPVRSALEKILAVCHGVMYKQLSAWMLHGLLLDQHEEFFIKQGPSSGTLSAQLEEDEEDLGIGGLTGKQLRELQDLRLIEEENMLAPSLKQFSLRVEILPSYIPVRVAEKILFVGESVQMFENQNVNLTRKGSILKNQEDTFAAELHRLKQQPLFSLVDFEQVVDRIRSTVAEHLWKLMVEESDLLGQLKIIKDFYLLGRGELFQAFIDTAQHMLKTPPTAVTEHDVNVAFQQSAHKVLLDDDNLLPLLHLTIEYHGKDHKADATQPREVPSRETSPREAPSSGWAALGLSYKVQWPLHILFTPAVLEKYNVVFKYLLSVRRVQAELQHCWALQMQRKHLKSNQTDAVKWRLRNHMAFLVDNLQYYLQVDVLESQFSQLLHQINSTRDFESIRLAHDHFLSNLLAQSFILLKPVFHCLNEILDLCHSFCSLVSQNLGPLDERGAAQLSILVKGFSRQSSLLFKILSSVRNHQINSDLAQLLLRLDYNKYYTQAGGTLGSFGM.

Positions 424 to 446 (DHKADATQPREVPSRETSPREAP) are disordered.

This sequence belongs to the TUBGCP family. As to quaternary structure, component of the gamma-tubulin ring complex (gTuRC) consisting of TUBGCP2, TUBGCP3, TUBGCP4, TUBGCP5 and TUBGCP6 and gamma-tubulin TUBG1 or TUBG2. TUBGCP2, TUBGCP3, TUBGCP4, TUBGCP5 and TUBGCP6 assemble in a 5:5:2:1:1 stoichiometry; each is associated with a gamma-tubulin, thereby arranging 14 gamma-tubulins in a helical manner. Gamma-tubulin at the first position is blocked by TUBGCP3 at the last position, allowing 13 protafilaments to grow into a microtubule. The gTuRC (via TUBGCP3 and TUBGCP6) interacts with ACTB and MZT1; the interactions form a luminal bridge that stabilizes the initial structure during complex assembly. The gTuRC (via TUBGCP2) interacts with MZT2A/MZT2B and CDK5RAP2 (via CM1 motif); the interactions play a role in gTuRC activation. Interacts with NINL. Interacts with ATF5; the ATF5:PCNT:polyglutamylated tubulin (PGT) tripartite unites the mother centriole and the pericentriolar material (PCM) in the centrosome.

Its subcellular location is the cytoplasm. The protein localises to the cytoskeleton. It localises to the microtubule organizing center. The protein resides in the centrosome. Functionally, component of the gamma-tubulin ring complex (gTuRC) which mediates microtubule nucleation. The gTuRC regulates the minus-end nucleation of alpha-beta tubulin heterodimers that grow into microtubule protafilaments, a critical step in centrosome duplication and spindle formation. This chain is Gamma-tubulin complex component 4 (Tubgcp4), found in Mus musculus (Mouse).